Reading from the N-terminus, the 678-residue chain is MELRPYQWEVILPALEGKNIIIWLPTGAGKTRAAAFVAKRHLETVDRGKVVVLVNRVHLVSQHAEEFRRMLDKHWTVTTLSGDMGSRAGFGLMARSHDLLICTAELLQLALNSSEEDEHVELREFSLIVVDECHHTHKDTVYNTILSRYLEQKLKKAEPLPQVLGLTASPGTGGATKLQGAIDHILQLCANLDTCHIMSPKNCYSQLLMHNPKPCKQYDLCQRRAQDPFGDLIKKLMNQIHQQLEMPDLKQQFGTQMYEQQVVQLCKDAAEAGLQEQRVYALHLRRYNDALFIHDTVRARDALDMLQDFYDRERTTKTQMVRAESWLLKLFDDHKNVLGQLAARGPENPKLEMLERILLKQFGSPGHTRGIIFTRTRQTASSLLLWLRQQPCLQTVGIKPQMLIGAGNTSQSTHMTQKDQQEVIQEFRDGILSLLVATSVAEEGLDIAQCNVVVRYGLLTNEISMVQARGRARAGQSVYSFLATEGSREMKRELTNEALEVLMEKAVAAVQKMDPDEFKAKIRDLQQASLVKRAARAAHREIQQGQFLPEHVQLLCINCMVAVGYGSDLRKVEGTHHVNVNPNFSVYYTTSQNPVVINKVFKDWRPGGTIRCSNCGEVWGFQMIYKSVTLPVLKIGSILLETPRGKIQAKKWSRVPFSIPVFDILQDCTQSLSELSLD.

The Helicase ATP-binding domain maps to 11–188 (ILPALEGKNI…QGAIDHILQL (178 aa)). 24–31 (LPTGAGKT) contributes to the ATP binding site. Residues 131-134 (DECH) carry the DECH box motif. The Helicase C-terminal domain maps to 353-514 (MLERILLKQF…KAVAAVQKMD (162 aa)). A coiled-coil region spans residues 489-546 (EMKRELTNEALEVLMEKAVAAVQKMDPDEFKAKIRDLQQASLVKRAARAAHREIQQGQ). An RLR CTR domain is found at 542–669 (IQQGQFLPEH…PVFDILQDCT (128 aa)). Positions 556, 559, 612, and 615 each coordinate Zn(2+). The tract at residues 572 to 655 (VEGTHHVNVN…KIQAKKWSRV (84 aa)) is RNA-binding.

Belongs to the helicase family. RLR subfamily. As to quaternary structure, monomer in the absence of dsRNA. Homodimer in the presence of dsRNA. Interacts with RIGI (via CARD domain), MAVS/IPS1 and DDX60. Found in a complex with RIGI and IFIH1/MDA5. Interacts with ANKRD17. Directly interacts with ATG5 and ATG12, either as ATG5 and ATG12 monomers or as ATG12-ATG5 conjugates. In terms of tissue distribution, highly expressed in mammary tissues. Expressed in liver and testis. Expressed at lower level in spleen, embryo, mammary gland and breast tumors.

It localises to the cytoplasm. The catalysed reaction is ATP + H2O = ADP + phosphate + H(+). Its function is as follows. Acts as a regulator of RIGI and IFIH1/MDA5 mediated antiviral signaling. Cannot initiate antiviral signaling as it lacks the CARD domain required for activating MAVS/IPS1-dependent signaling events. Can have both negative and positive regulatory functions related to RIGI and IFIH1/MDA5 signaling and this role in regulating signaling may be complex and could probably depend on characteristics of the infecting virus or target cells, or both. Its inhibitory action on RIG-I signaling may involve the following mechanisms: competition with RIGI for binding to the viral RNA, binding to RIGI and inhibiting its dimerization and interaction with MAVS/IPS1, competing with IKBKE in its binding to MAVS/IPS1 thereby inhibiting activation of interferon regulatory factor 3 (IRF3). Its positive regulatory role may involve unwinding or stripping nucleoproteins of viral RNA thereby facilitating their recognition by RIGI and IFIH1/MDA5. Involved in the innate immune response to various RNA viruses and some DNA viruses such as poxviruses, and also to the bacterial pathogen Listeria monocytogenes. Can bind both ssRNA and dsRNA, with a higher affinity for dsRNA. Shows a preference to 5'-triphosphorylated RNA, although it can recognize RNA lacking a 5'-triphosphate. The polypeptide is ATP-dependent RNA helicase DHX58 (Mus musculus (Mouse)).